The following is a 353-amino-acid chain: Phosphoribosylformylglycinamidine cyclo-ligase (353 aa).

The protein belongs to the AIR synthase family.

It localises to the cytoplasm. The catalysed reaction is 2-formamido-N(1)-(5-O-phospho-beta-D-ribosyl)acetamidine + ATP = 5-amino-1-(5-phospho-beta-D-ribosyl)imidazole + ADP + phosphate + H(+). It functions in the pathway purine metabolism; IMP biosynthesis via de novo pathway; 5-amino-1-(5-phospho-D-ribosyl)imidazole from N(2)-formyl-N(1)-(5-phospho-D-ribosyl)glycinamide: step 2/2. In Pseudomonas aeruginosa (strain LESB58), this protein is Phosphoribosylformylglycinamidine cyclo-ligase.